The sequence spans 170 residues: Putative 5'(3')-deoxyribonucleotidase (170 aa).

Aspartate 28 (nucleophile) is an active-site residue. Mg(2+)-binding residues include aspartate 28, aspartate 30, and aspartate 134. Residue aspartate 30 is the Proton donor of the active site.

It belongs to the 5'(3')-deoxyribonucleotidase family. Mg(2+) is required as a cofactor.

In terms of biological role, dephosphorylates the 5' and 2'(3')-phosphates of deoxyribonucleotides. In Vibrio parahaemolyticus (KVP40), this protein is Putative 5'(3')-deoxyribonucleotidase.